The primary structure comprises 202 residues: Potassium-transporting ATPase KdpC subunit 1 (202 aa).

The helical transmembrane segment at leucine 17–phenylalanine 37 threads the bilayer.

This sequence belongs to the KdpC family. As to quaternary structure, the system is composed of three essential subunits: KdpA, KdpB and KdpC.

It localises to the cell inner membrane. Functionally, part of the high-affinity ATP-driven potassium transport (or Kdp) system, which catalyzes the hydrolysis of ATP coupled with the electrogenic transport of potassium into the cytoplasm. This subunit acts as a catalytic chaperone that increases the ATP-binding affinity of the ATP-hydrolyzing subunit KdpB by the formation of a transient KdpB/KdpC/ATP ternary complex. The protein is Potassium-transporting ATPase KdpC subunit 1 of Nostoc sp. (strain PCC 7120 / SAG 25.82 / UTEX 2576).